Reading from the N-terminus, the 453-residue chain is Tryptophan biosynthesis protein TrpCF (453 aa).

The interval 1–257 (MQDTTLKKII…TAVRSIIFGD (257 aa)) is indole-3-glycerol phosphate synthase. Positions 258 to 453 (NKVCGLTRSI…KSIFQKLRYG (196 aa)) are N-(5'-phosphoribosyl)anthranilate isomerase.

It in the N-terminal section; belongs to the TrpC family. This sequence in the C-terminal section; belongs to the TrpF family. Monomer.

The enzyme catalyses N-(5-phospho-beta-D-ribosyl)anthranilate = 1-(2-carboxyphenylamino)-1-deoxy-D-ribulose 5-phosphate. It catalyses the reaction 1-(2-carboxyphenylamino)-1-deoxy-D-ribulose 5-phosphate + H(+) = (1S,2R)-1-C-(indol-3-yl)glycerol 3-phosphate + CO2 + H2O. It functions in the pathway amino-acid biosynthesis; L-tryptophan biosynthesis; L-tryptophan from chorismate: step 3/5. The protein operates within amino-acid biosynthesis; L-tryptophan biosynthesis; L-tryptophan from chorismate: step 4/5. In terms of biological role, bifunctional enzyme that catalyzes two sequential steps of tryptophan biosynthetic pathway. The first reaction is catalyzed by the isomerase, coded by the TrpF domain; the second reaction is catalyzed by the synthase, coded by the TrpC domain. The sequence is that of Tryptophan biosynthesis protein TrpCF (trpC) from Buchnera aphidicola subsp. Acyrthosiphon pisum (strain APS) (Acyrthosiphon pisum symbiotic bacterium).